A 246-amino-acid chain; its full sequence is Homeobox protein SIX6 (246 aa).

The segment at residues 126-186 (WDGEQKTHCF…KNRRQRDRAA (61 aa)) is a DNA-binding region (homeobox). The segment at 190 to 246 (NRLQQQVLSQGPGRVLRSEGEGTPEVLGVASSPAASLSSKAATSAISITSSDSECDI) is disordered. A Phosphothreonine modification is found at T212. Residues 219 to 246 (ASSPAASLSSKAATSAISITSSDSECDI) show a composition bias toward low complexity. 4 positions are modified to phosphoserine: S221, S225, S227, and S228.

This sequence belongs to the SIX/Sine oculis homeobox family. As to quaternary structure, interacts with TLE4 and TLE5. In the developing embryo, expressed mainly in the ventral optic stalk, optic chiasma, the neural retina and the primordial tissues that give rise to the pituitary/hypothalamus axis. Not expressed in the lens placode.

The protein resides in the nucleus. May be involved in eye development. The protein is Homeobox protein SIX6 (Six6) of Mus musculus (Mouse).